A 113-amino-acid chain; its full sequence is Protein ORF3 (113 aa).

Hydrophobic stretches follow at residues 1–21 (MGSPCALGLFCCCSSCFCLCC) and 32–52 (AVVGGAAAVPAVVSGVTGLIL). The interval 27–67 (ASRLAAVVGGAAAVPAVVSGVTGLILSPSPSPIFIQPTPSP) is interaction with host HPX. Residues 47–71 (VTGLILSPSPSPIFIQPTPSPPMSF) are interaction with the capsid protein. The residue at position 70 (serine 70) is a Phosphoserine; by host. The tract at residues 71–113 (FHNPGLELALDSRPAPLXPLGVTSPSAPPLPPVVDLPQLGLRR) is homodimerization, and interaction with host AMBP/bikunin. The disordered stretch occupies residues 90 to 113 (LGVTSPSAPPLPPVVDLPQLGLRR). An interaction with host SRC, HCK, FYN, PIK3R3 and GRB2 region spans residues 94-103 (SPSAPPLPPV). Residues 95–98 (PSAP) carry the PTAP/PSAP motif motif.

It belongs to the hepevirus ORF3 protein family. Forms homooligomers. Interacts with host SRC, HCK, FYN, PIK3R3 and GRB2 (via SH3 domain); binding does not activate the kinases. Interacts with host AMBP/bikunin and AMBP/alpha-1-microglobulin peptides. Interacts with host HPX/hemopexin. Interacts (when phosphorylated) with capsid protein ORF2. Interacts with host TSG101; this interaction plays a role in viral release from the host cell. Interacts with host SIRPA; this interaction down-regulates the phosphorylation of host IRF3. In terms of processing, palmitoylated in the N-terminus.

It is found in the host endoplasmic reticulum membrane. The protein localises to the host cytoplasm. It localises to the host cytoskeleton. Its subcellular location is the virion. The protein resides in the host cell membrane. Small multifunctional phosphoprotein involved in virion morphogenesis, egress and counteracting host innate immunity. Plays critical roles in the final steps of viral release by interacting with host TSG101, a member of the vacuolar protein-sorting pathway and using other cellular host proteins involved in vesicle formation pathway. Also acts as a viroporin and forms ion conductive pores allowing viral particle release. Impairs the generation of type I interferon by down-regulating host TLR3 and TLR7 as well as their downstream signaling pathways. Down-regulates the phosphorylation of host IRF3 via the interaction with host SIRP-alpha, thereby inhibiting IFN-I expression. Interacts with host microtubules. This chain is Protein ORF3, found in Hepatitis E virus genotype 3 (isolate Human/United States/US2) (HEV-3).